A 448-amino-acid chain; its full sequence is DNA primase DnaG (448 aa).

The Toprim domain maps to 186 to 260; it reads DSIIVVEGRN…EADFVARAPP (75 aa). Glu192, Asp234, and Asp236 together coordinate Mg(2+). The segment at 318–340 is disordered; that stretch reads AEVIEEPPEQPPKNEEIREEQSQ. Residues 329 to 338 are compositionally biased toward basic and acidic residues; it reads PKNEEIREEQ.

Belongs to the archaeal DnaG primase family. As to quaternary structure, forms a ternary complex with MCM helicase and DNA. Component of the archaeal exosome complex. Mg(2+) serves as cofactor.

The catalysed reaction is ssDNA + n NTP = ssDNA/pppN(pN)n-1 hybrid + (n-1) diphosphate.. Its function is as follows. RNA polymerase that catalyzes the synthesis of short RNA molecules used as primers for DNA polymerase during DNA replication. Also part of the exosome, which is a complex involved in RNA degradation. Acts as a poly(A)-binding protein that enhances the interaction between heteromeric, adenine-rich transcripts and the exosome. The protein is DNA primase DnaG of Thermoplasma acidophilum (strain ATCC 25905 / DSM 1728 / JCM 9062 / NBRC 15155 / AMRC-C165).